The sequence spans 175 residues: Bifunctional protein PyrR (175 aa).

Substrate is bound by residues 40–41 (TR), 102–110 (DDVLYTGRT), R135, and V159. Residues 98 to 110 (VVIIDDVLYTGRT) carry the PRPP-binding motif.

This sequence belongs to the purine/pyrimidine phosphoribosyltransferase family. PyrR subfamily. In terms of assembly, homodimer and homohexamer; in equilibrium.

The catalysed reaction is UMP + diphosphate = 5-phospho-alpha-D-ribose 1-diphosphate + uracil. Its function is as follows. Regulates transcriptional attenuation of the pyrimidine nucleotide (pyr) operon by binding in a uridine-dependent manner to specific sites on pyr mRNA. This disrupts an antiterminator hairpin in the RNA and favors formation of a downstream transcription terminator, leading to a reduced expression of downstream genes. Functionally, also displays a weak uracil phosphoribosyltransferase activity which is not physiologically significant. The polypeptide is Bifunctional protein PyrR (Staphylococcus epidermidis (strain ATCC 12228 / FDA PCI 1200)).